The chain runs to 343 residues: MTISATEALTRCIEHREIFHDEMLHLMRMLMRGEMSPQIASALLMGLRVKKETVGEITAAAQVMREFATPVVTPNPQDLLDMCGTGGDGSHTFNISTTAMFVAAAVGVPIAKHGNRSASSSSGSADVLEALGANLQLSPQAVAECIEATGIGFMFAPAHHGAMKNVAAVRKELGVRTIFNILGPLTNPAGAANQLMGVFHPDLVGIQVRVLERLGSRHVLVVHGKDGMDEASLGAATLVGELKNGVVREYEIHPEDYGLSMMSNRSIKVSNREQSRELVIEALDNVEGAARDIVALNAGLAIYAGNKADSIESALALAFEMIANGAARAKLEEFCAYTRKFAK.

5-phospho-alpha-D-ribose 1-diphosphate-binding positions include G84, 87–88 (GD), T92, 94–97 (NIST), 112–120 (KHGNRSASS), and S124. G84 contributes to the anthranilate binding site. S96 provides a ligand contact to Mg(2+). Position 115 (N115) interacts with anthranilate. Anthranilate is bound at residue R170. Mg(2+)-binding residues include D229 and E230.

Belongs to the anthranilate phosphoribosyltransferase family. As to quaternary structure, homodimer. Mg(2+) is required as a cofactor.

It catalyses the reaction N-(5-phospho-beta-D-ribosyl)anthranilate + diphosphate = 5-phospho-alpha-D-ribose 1-diphosphate + anthranilate. It functions in the pathway amino-acid biosynthesis; L-tryptophan biosynthesis; L-tryptophan from chorismate: step 2/5. Its function is as follows. Catalyzes the transfer of the phosphoribosyl group of 5-phosphorylribose-1-pyrophosphate (PRPP) to anthranilate to yield N-(5'-phosphoribosyl)-anthranilate (PRA). The chain is Anthranilate phosphoribosyltransferase from Bordetella avium (strain 197N).